The following is a 90-amino-acid chain: DNA-directed RNA polymerase subunit omega (90 aa).

A disordered region spans residues 69–90 (RQEQQEQEAAELAAVSSIAHTR).

The protein belongs to the RNA polymerase subunit omega family. The RNAP catalytic core consists of 2 alpha, 1 beta, 1 beta' and 1 omega subunit. When a sigma factor is associated with the core the holoenzyme is formed, which can initiate transcription.

It carries out the reaction RNA(n) + a ribonucleoside 5'-triphosphate = RNA(n+1) + diphosphate. Functionally, promotes RNA polymerase assembly. Latches the N- and C-terminal regions of the beta' subunit thereby facilitating its interaction with the beta and alpha subunits. The sequence is that of DNA-directed RNA polymerase subunit omega from Vibrio atlanticus (strain LGP32) (Vibrio splendidus (strain Mel32)).